Reading from the N-terminus, the 778-residue chain is pH-response regulator protein palH/prr-4 (778 aa).

Topologically, residues 1–108 (MEPRQLFSDP…DPFYASTFPQ (108 aa)) are extracellular. A helical membrane pass occupies residues 109 to 129 (CYALAATTIIAYTLVIMLFIT). The Periplasmic segment spans residues 130-160 (PRSFLDGGVVVLGRKGFTNGGGGTSIGGRPW). The chain crosses the membrane as a helical span at residues 161-181 (LQKVAALSVAISLTIANAATF). Residues 182–201 (RAAEQQYSWGVQNAKQLQED) lie on the Extracellular side of the membrane. A helical membrane pass occupies residues 202–222 (VLGGAELKIIRIISDTFLWLA). Residues 223–237 (QAQTLIRLFPRQREK) lie on the Periplasmic side of the membrane. A helical transmembrane segment spans residues 238–258 (VIIKWTAFALITLDVIFQSLN). At 259-275 (SFKYGGSDLTRPKFTEA) the chain is on the extracellular side. A helical membrane pass occupies residues 276 to 296 (VPALSYLFALALGVLYAAWVL). Residues 297 to 314 (YYSIMKKRYAFYHPLMKN) are Periplasmic-facing. Residues 315–335 (MILVAVLSVVSILVPVVFFIL) form a helical membrane-spanning segment. Over 336–341 (DISKPD) the chain is Extracellular. Residues 342–362 (FAGWGDYVRWVGAAAASVIVW) form a helical membrane-spanning segment. The Periplasmic segment spans residues 363 to 778 (EWVERIEALE…RSDSSTTPSP (416 aa)). Disordered regions lie at residues 394-499 (ASQS…DTTS), 514-605 (ELTS…DENS), and 660-778 (ELNH…TPSP). The span at 446–456 (HRTEPSSRNEP) shows a compositional bias: basic and acidic residues. Over residues 457–466 (NEGSSPVAET) the composition is skewed to polar residues. Composition is skewed to basic and acidic residues over residues 588–605 (FVTR…DENS) and 661–675 (LNHS…EESR). Residues 720–732 (PIVTQGSFTNNRY) show a composition bias toward polar residues. Positions 749–759 (ARAPSQPQSPS) are enriched in low complexity. Polar residues predominate over residues 769–778 (RSDSSTTPSP).

It belongs to the palH/RIM21 family.

The protein resides in the cell membrane. Its function is as follows. Required for the proteolytic cleavage of the transcription factor pacc-1 in response to alkaline ambient pH. The sequence is that of pH-response regulator protein palH/prr-4 (prr-4) from Neurospora crassa (strain ATCC 24698 / 74-OR23-1A / CBS 708.71 / DSM 1257 / FGSC 987).